The sequence spans 152 residues: Protein NrdI (152 aa).

The protein belongs to the NrdI family.

Functionally, probably involved in ribonucleotide reductase function. This is Protein NrdI from Mycobacterium sp. (strain JLS).